A 281-amino-acid polypeptide reads, in one-letter code: Polyamine aminopropyltransferase (281 aa).

The 235-residue stretch at 2–236 (DLWLKEGQIS…GYWSFTIGSK (235 aa)) folds into the PABS domain. Gln31 lines the S-methyl-5'-thioadenosine pocket. Spermidine contacts are provided by His62 and Asp86. S-methyl-5'-thioadenosine contacts are provided by residues Glu106 and 138–139 (DG). Residue Asp156 is the Proton acceptor of the active site. 156 to 159 (DSTD) is a binding site for spermidine.

This sequence belongs to the spermidine/spermine synthase family. In terms of assembly, homodimer or homotetramer.

It localises to the cytoplasm. The catalysed reaction is S-adenosyl 3-(methylsulfanyl)propylamine + putrescine = S-methyl-5'-thioadenosine + spermidine + H(+). Its pathway is amine and polyamine biosynthesis; spermidine biosynthesis; spermidine from putrescine: step 1/1. In terms of biological role, catalyzes the irreversible transfer of a propylamine group from the amino donor S-adenosylmethioninamine (decarboxy-AdoMet) to putrescine (1,4-diaminobutane) to yield spermidine. The sequence is that of Polyamine aminopropyltransferase from Clostridium tetani (strain Massachusetts / E88).